The sequence spans 550 residues: Tether containing UBX domain for GLUT4 (550 aa).

N-acetylalanine is present on A2. A disordered region spans residues 185 to 320 (AVRSKAPGSP…EPPVDRDPVV (136 aa)). S193 is subject to Phosphoserine. Residues 193 to 206 (SPVSSLSADQASSS) are compositionally biased toward low complexity. The segment covering 217–226 (SRGDLNHEGD) has biased composition (basic and acidic residues). The span at 242–252 (DAQTKQSTSEP) shows a compositional bias: polar residues. The interval 313–376 (PVDRDPVVYH…LVTKAFREAQ (64 aa)) is interaction with GLUT4. In terms of domain architecture, UBX spans 382–458 (ERYPKVALRV…NLFPAALVHF (77 aa)). S496 is modified (phosphoserine). The disordered stretch occupies residues 496–550 (SPPLLPAPDPVSLESEPIAEDGALGPPEPIQGTAQPVKRSLGKVPKWLKLPASKR).

As to quaternary structure, interacts with VCP. Interacts with VCPKMT. Interacts with GLUT4. Ubiquitous.

It is found in the endomembrane system. The protein localises to the endoplasmic reticulum-Golgi intermediate compartment membrane. The protein resides in the cytoplasm. It localises to the nucleus. Its function is as follows. Enhances VCP methylation catalyzed by VCPKMT. Tethering protein that sequesters GLUT4-containing vesicles in the cytoplasm in the absence of insulin. Modulates the amount of GLUT4 that is available at the cell surface. The protein is Tether containing UBX domain for GLUT4 (Aspscr1) of Mus musculus (Mouse).